Consider the following 314-residue polypeptide: Homoserine O-succinyltransferase (314 aa).

Cysteine 142 (acyl-thioester intermediate) is an active-site residue. Substrate is bound by residues lysine 163 and serine 192. Histidine 235 functions as the Proton acceptor in the catalytic mechanism. Glutamate 237 is an active-site residue. Residue arginine 249 participates in substrate binding.

This sequence belongs to the MetA family.

Its subcellular location is the cytoplasm. The catalysed reaction is L-homoserine + succinyl-CoA = O-succinyl-L-homoserine + CoA. It functions in the pathway amino-acid biosynthesis; L-methionine biosynthesis via de novo pathway; O-succinyl-L-homoserine from L-homoserine: step 1/1. Its function is as follows. Transfers a succinyl group from succinyl-CoA to L-homoserine, forming succinyl-L-homoserine. This is Homoserine O-succinyltransferase from Shewanella sediminis (strain HAW-EB3).